Here is a 390-residue protein sequence, read N- to C-terminus: Endoglucanase gh5-1 (390 aa).

The signal sequence occupies residues 1 to 16 (MKATILASTFAAGALA). The 36-residue stretch at 17–52 (QSGAWGQCGGNGWSGATSCISGYACNYVNDWYSQCQ) folds into the CBM1 domain. N-linked (GlcNAc...) asparagine glycosylation is found at Asn-157 and Asn-261.

This sequence belongs to the glycosyl hydrolase 5 (cellulase A) family. In terms of processing, N-glycosylated.

The protein localises to the secreted. It catalyses the reaction Endohydrolysis of (1-&gt;4)-beta-D-glucosidic linkages in cellulose, lichenin and cereal beta-D-glucans.. Functionally, endoglucanase that plays an important role in biomass degradation. Binds onto plant cell walls to participate in the hydrolysis of cellulose. The chain is Endoglucanase gh5-1 from Neurospora crassa (strain ATCC 24698 / 74-OR23-1A / CBS 708.71 / DSM 1257 / FGSC 987).